Reading from the N-terminus, the 366-residue chain is Galactoside alpha-(1,2)-fucosyltransferase 1 (366 aa).

Residues 1 to 8 lie on the Cytoplasmic side of the membrane; the sequence is MWPLSHRH. A helical; Signal-anchor for type II membrane protein transmembrane segment spans residues 9 to 25; sequence LCLAFLLVCVLSAISFF. The Lumenal portion of the chain corresponds to 26 to 366; sequence LHIHQDSFPH…LSPLWTLAEP (341 aa). Asparagine 66, asparagine 302, and asparagine 328 each carry an N-linked (GlcNAc...) asparagine glycan.

Belongs to the glycosyltransferase 11 family.

The protein resides in the golgi apparatus. Its subcellular location is the golgi stack membrane. The catalysed reaction is a beta-D-galactosyl-(1-&gt;4)-N-acetyl-beta-D-glucosaminyl derivative + GDP-beta-L-fucose = an alpha-L-Fuc-(1-&gt;2)-beta-D-Gal-(1-&gt;4)-beta-D-GlcNAc derivative + GDP + H(+). It catalyses the reaction a ganglioside GA1 + GDP-beta-L-fucose = a ganglioside Fuc-GA1 + GDP + H(+). It carries out the reaction a beta-D-Gal-(1-&gt;3)-beta-D-GlcNAc-(1-&gt;3)-beta-D-Gal-(1-&gt;4)-beta-D-Glc-(1&lt;-&gt;1')-Cer(d18:1(4E)) + GDP-beta-L-fucose = alpha-L-fucosyl-(1-&gt;2)- beta-D-galactosyl-(1-&gt;3)-N-acetyl-beta-D-glucosaminyl-(1-&gt;3)-beta-D-galactosyl-(1-&gt;4)-beta-D-glucosyl-(1&lt;-&gt;1')-N-acylsphing-4-enine + GDP + H(+). The enzyme catalyses a neolactoside nLc4Cer(d18:1(4E)) + GDP-beta-L-fucose = a neolactoside IV(2)-alpha-Fuc-nLc4Cer(d18:1(4E)) + GDP + H(+). The catalysed reaction is a ganglioside GM1 + GDP-beta-L-fucose = a ganglioside Fuc-GM1 + GDP + H(+). It catalyses the reaction beta-D-galactosyl-(1-&gt;3)-N-acetyl-D-galactosamine + GDP-beta-L-fucose = alpha-L-fucosyl-(1-&gt;2)-beta-D-galactosyl-(1-&gt;3)-N-acetyl-D-galactosamine + GDP + H(+). It functions in the pathway protein modification; protein glycosylation. Functionally, catalyzes the transfer of L-fucose, from a guanosine diphosphate-beta-L-fucose, to the terminal galactose residue of glycoconjugates through an alpha(1,2) linkage leading to H antigen synthesis that is an intermediate substrate in the synthesis of ABO blood group antigens. H antigen is essential for maturation of the glomerular layer of the main olfactory bulb, in cell migration and early cell-cell contacts during tumor associated angiogenesis. Preferentially fucosylates soluble lactose and to a lesser extent fucosylates glycolipids gangliosides GA1 and GM1a. The chain is Galactoside alpha-(1,2)-fucosyltransferase 1 from Lagothrix lagotricha (Brown woolly monkey).